Reading from the N-terminus, the 71-residue chain is MTVQDYLLKFRKISSLESLEKLFDHLNYTLTDDMDIVNMYRAADHRRAELVSGGRLFDVGQVPQSVWRYVQ.

This sequence belongs to the Hha/YmoA/Cnu family. In terms of assembly, forms complexes with both H-NS and StpA.

In terms of biological role, binds to H-NS and modified the range of genes it silences; H-NS alonge silences core gene while the H-NS-Hha complex (and presumably also H-NS-YdgT) silences genes acquired by horizontal gene transfer. Plays a role silencing virulence factors in the absence of factors that induce pathogenicity. The complex formed with H-NS binds to the specific 26-bp cnb site in the origin of replication oriC. This is Transcription modulator YdgT (ydgT) from Salmonella choleraesuis (strain SC-B67).